Reading from the N-terminus, the 296-residue chain is MNSPFHNIGIVTRPNTPDIQDTAHTLITFLKQHGFTVYLDEVGIKEGCIYTQDTVGCHIVNKTELGQYCDLVAVLGGDGTFLSVAREIALRAVPIIGINQGHLGFLTQIPREYMTDKLLPVLEGKYLAEERILIEAALIREGKTAERAIALNDAVLSRGGAGQMIEFEVFVNREFVYTQRSDGLIVSTPTGSTAYSLAAGGPIMQAGLHAFTLVPICPQSMTNRPIAIPDTSEIEILVTQGGDARVHFDGQTHIDVQNLDRITIRRYRNPLRILHPTDYQYFKTLRQKLHWGEQLV.

The active-site Proton acceptor is the Asp78. NAD(+) is bound by residues 78–79, 152–153, Arg180, Asp182, and Gln251; these read DG and ND.

This sequence belongs to the NAD kinase family. It depends on a divalent metal cation as a cofactor.

The protein resides in the cytoplasm. It catalyses the reaction NAD(+) + ATP = ADP + NADP(+) + H(+). Involved in the regulation of the intracellular balance of NAD and NADP, and is a key enzyme in the biosynthesis of NADP. Catalyzes specifically the phosphorylation on 2'-hydroxyl of the adenosine moiety of NAD to yield NADP. The sequence is that of NAD kinase from Neisseria meningitidis serogroup C (strain 053442).